Here is a 218-residue protein sequence, read N- to C-terminus: MKLGILGGTFNPIHSAHLRIAEEVRERCRLDRILFIPAATPPHKELAGEIPFADRHAMVAAAIADNPDFAVTDLENRRAGKSYSVHTLELLRQEYPRDEFYFIIGMDSYRSLGIWKDFPRLFELTNLVVAARPGSPCDDPLRLLPVVIQEQFCYDENAHMLRHQSGHVVIFLEETFLDISSTHIRQLVAAGRSIRYLLPSGVEHYIYRHGLYRSQERS.

Belongs to the NadD family.

It carries out the reaction nicotinate beta-D-ribonucleotide + ATP + H(+) = deamido-NAD(+) + diphosphate. It participates in cofactor biosynthesis; NAD(+) biosynthesis; deamido-NAD(+) from nicotinate D-ribonucleotide: step 1/1. In terms of biological role, catalyzes the reversible adenylation of nicotinate mononucleotide (NaMN) to nicotinic acid adenine dinucleotide (NaAD). This chain is Probable nicotinate-nucleotide adenylyltransferase, found in Syntrophotalea carbinolica (strain DSM 2380 / NBRC 103641 / GraBd1) (Pelobacter carbinolicus).